Here is a 179-residue protein sequence, read N- to C-terminus: Negative modulator of initiation of replication (179 aa).

Belongs to the SeqA family. In terms of assembly, homodimer. Polymerizes to form helical filaments.

Its subcellular location is the cytoplasm. Its function is as follows. Negative regulator of replication initiation, which contributes to regulation of DNA replication and ensures that replication initiation occurs exactly once per chromosome per cell cycle. Binds to pairs of hemimethylated GATC sequences in the oriC region, thus preventing assembly of replication proteins and re-initiation at newly replicated origins. Repression is relieved when the region becomes fully methylated. This Vibrio atlanticus (strain LGP32) (Vibrio splendidus (strain Mel32)) protein is Negative modulator of initiation of replication.